The primary structure comprises 212 residues: Ribosomal RNA large subunit methyltransferase E (212 aa).

S-adenosyl-L-methionine is bound by residues G56, W58, D78, D94, and D117. K157 (proton acceptor) is an active-site residue.

The protein belongs to the class I-like SAM-binding methyltransferase superfamily. RNA methyltransferase RlmE family.

Its subcellular location is the cytoplasm. The enzyme catalyses uridine(2552) in 23S rRNA + S-adenosyl-L-methionine = 2'-O-methyluridine(2552) in 23S rRNA + S-adenosyl-L-homocysteine + H(+). Its function is as follows. Specifically methylates the uridine in position 2552 of 23S rRNA at the 2'-O position of the ribose in the fully assembled 50S ribosomal subunit. This chain is Ribosomal RNA large subunit methyltransferase E, found in Ehrlichia chaffeensis (strain ATCC CRL-10679 / Arkansas).